The sequence spans 436 residues: UDP-N-acetylmuramate--L-alanine ligase (436 aa).

108–114 lines the ATP pocket; the sequence is GAHGKTS.

The protein belongs to the MurCDEF family.

The protein resides in the cytoplasm. It carries out the reaction UDP-N-acetyl-alpha-D-muramate + L-alanine + ATP = UDP-N-acetyl-alpha-D-muramoyl-L-alanine + ADP + phosphate + H(+). The protein operates within cell wall biogenesis; peptidoglycan biosynthesis. Its function is as follows. Cell wall formation. In Bacillus cereus (strain Q1), this protein is UDP-N-acetylmuramate--L-alanine ligase.